Consider the following 33-residue polypeptide: Cecropin-B (33 aa).

Lys-21 is modified (5-hydroxylysine).

In terms of assembly, monomer. In terms of tissue distribution, hemolymph.

It localises to the secreted. Cecropins have lytic and antibacterial activity against several Gram-positive and Gram-negative bacteria. Also has activity against fungi. The polypeptide is Cecropin-B (Heliothis virescens (Tobacco budworm moth)).